Consider the following 258-residue polypeptide: MCRVFTYIHTSAVRLSALGASRESTFFKSRTALIHTVNVANFHVSRQNCRRCLDASRHCFSTRSRTEERLLLQLSIPFLHQISPKPACPPSSLNSHSFECCSLTFSYSYMMVSCKLLLYYGTFSSIISIVLSCVATSPTGTVTTTVAPTTTTAATGCTSCTASQVTFAQSGGGVQIDTAGIPGTAAGCLTLTLTCTAGTGNYAFMQFNNNQGGPAENQDMGMTINALANCVDGNWVYTSGGVSRIVTQVSCNQAPNAG.

This is an uncharacterized protein from Caenorhabditis elegans.